The sequence spans 279 residues: 3-methyl-2-oxobutanoate hydroxymethyltransferase (279 aa).

Mg(2+) is bound by residues D43 and D82. Residues 43–44 (DS), D82, and K112 contribute to the 3-methyl-2-oxobutanoate site. Residue E114 coordinates Mg(2+). E181 functions as the Proton acceptor in the catalytic mechanism.

It belongs to the PanB family. Homodecamer; pentamer of dimers. It depends on Mg(2+) as a cofactor.

Its subcellular location is the cytoplasm. It carries out the reaction 3-methyl-2-oxobutanoate + (6R)-5,10-methylene-5,6,7,8-tetrahydrofolate + H2O = 2-dehydropantoate + (6S)-5,6,7,8-tetrahydrofolate. It participates in cofactor biosynthesis; (R)-pantothenate biosynthesis; (R)-pantoate from 3-methyl-2-oxobutanoate: step 1/2. Its function is as follows. Catalyzes the reversible reaction in which hydroxymethyl group from 5,10-methylenetetrahydrofolate is transferred onto alpha-ketoisovalerate to form ketopantoate. The sequence is that of 3-methyl-2-oxobutanoate hydroxymethyltransferase from Exiguobacterium sibiricum (strain DSM 17290 / CCUG 55495 / CIP 109462 / JCM 13490 / 255-15).